Reading from the N-terminus, the 74-residue chain is Antimicrobial peptide HsAp4 (74 aa).

Residues 1–21 (MSRRRILILVLVTMLVKTMAG) form the signal peptide. Residues 22 to 33 (MESKWVETTYEI) constitute a propeptide that is removed on maturation. Residue R65 is modified to Arginine amide. The propeptide occupies 69–74 (AISEQT).

Belongs to the non-disulfide-bridged peptide (NDBP) superfamily. Medium-length antimicrobial peptide (group 3) family. As to expression, expressed by the venom gland.

The protein localises to the secreted. Its subcellular location is the target cell membrane. Functionally, possesses antimicrobial activity against both Gram-negative and Gram-positive bacteria, as well as against the fungus C.tropicalis. Also possesses a relatively high hemolytic activity. May act by disrupting the integrity of the bacterial cell membrane. This is Antimicrobial peptide HsAp4 from Heterometrus spinifer (Asia giant forest scorpion).